Reading from the N-terminus, the 1185-residue chain is MEHHEDNAQLDNYLQNRLAESLQICGGAGEHNPHLADATGGNGCAPGIAPSKSDEVDGEEDEEWKYIHEVRQSEKLQQEKLPLTKETGNGFGPGRDSDNQVHGNGAAAVFNLYEEDVEVIKNDGDFSTNSNTTTSTDEVVARQAQEPNQLPEQLQQQQQIESQGVHEDPRQEDEDEHSSVATTYGTSSLSENNSSPLDQEEVVMVAQTVGQEQLVDFDNKENSYFVKNLEENHSQLNPNAVAFVPGVGSQSSSPLPAAEDPLPGVQPRPFLPGGTLDDLVAESPRKEFARINMDGIAVPDEREFDIEADMRPHELEQESDTFGAGHLEMQLLNGIGTADQAALRDVLDHGPETSVDMELPLDQVPNDADIMKQSIYAEHNSSIEDILNSVQPLPIQTCDDKELIHVEEKEHVSKSPSTEELQFQSDFPNNQESHTLFNNTEQDPMQASFYLEHTSQKAQEGCQEQMQLPAECSDIFADQSLLLDTSAPQLSSEADSPVAKLELESQQAGIVDITPSPLSSTAEKHLVEDTKELVEEYTLDPESHFFGVVSSQAPLQLFGKHTLPSIIHSCKHRVASEQNDEENAVFESVSGYETQNFDEISSPPEGINPFAQPFTPAHLVIEQANTMMEDVGGMPIPASEDFAICDKVASKSSNEVEDHRSEQQAFVKEELLHPVGDVVAQVENLGTEKNFVVEEERLPISVSDEIPLSSASKEKLLPDTTDEQLLTSALEEKLRSVAPEESVSTAADGQSISQFDEYVIASNKPLEDILEPEKDVEVAKSLSEKTSVATVAGGAVVGATKTHSATKAGSTAASAKSKTETLVMKKTTASSTSVYGANKSAAPRPSTARLGIKSTSIATKTSTTSSLTGNPRKSLSSNVGSTVKPPTKLSGTRPATAPVSKVTLGAKTITNKPTASGTASDNVTRTTLRPLVSTNARRPATSGTGSVASSTARRPVTNAKGSAPGSAASTKVRPAATMTAPVKPKVLSPRSTISSTTTVRKVPSTSTPSFSTRSPNKQQSNGLGKNTSSTTTSTATATITKSFTARSAPKFTHSASLTYNNGSTSRRLLVPGSSSTTTTSSLRKSSPLKAAPGKAASKPLTPQSKDGTAKSSPAVLKARNSTLMGGEGVAPSNECVPTPNGQINAEEVVKLKGKGLAEEVKIIEEQKLHEQDVPAHNAEVPLLDF.

The span at 146–159 (EPNQLPEQLQQQQQ) shows a compositional bias: low complexity. Positions 146–196 (EPNQLPEQLQQQQQIESQGVHEDPRQEDEDEHSSVATTYGTSSLSENNSSP) are disordered. The span at 179-196 (SVATTYGTSSLSENNSSP) shows a compositional bias: polar residues. S354 and S448 each carry phosphoserine. Y450 bears the Phosphotyrosine mark. 3 positions are modified to phosphoserine: S709, S710, and S712. Position 721 is a phosphothreonine (T721). Phosphoserine is present on S728. The microtubule-binding stretch occupies residues 745 to 977 (TAADGQSISQ…ASTKVRPAAT (233 aa)). The segment covering 856–866 (SIATKTSTTSS) has biased composition (low complexity). 2 disordered regions span residues 856 to 1035 (SIAT…TSTA) and 1054 to 1114 (SASL…SSPA). 2 stretches are compositionally biased toward polar residues: residues 867-881 (LTGN…NVGS) and 908-936 (TITN…STNA). S874 carries the phosphoserine modification. A compositionally biased stretch (low complexity) spans 940 to 952 (ATSGTGSVASSTA). Positions 989–999 (PRSTISSTTTV) are enriched in polar residues. Residues 1003–1015 (PSTSTPSFSTRSP) are compositionally biased toward low complexity. Polar residues-rich tracts occupy residues 1016-1026 (NKQQSNGLGKN) and 1054-1066 (SASL…STSR). Phosphoserine occurs at positions 1075 and 1086. Positions 1100 to 1111 (LTPQSKDGTAKS) are enriched in polar residues. Residue S1121 is modified to Phosphoserine.

It is found in the cytoplasm. It localises to the cytoskeleton. The protein resides in the spindle. In terms of biological role, may play an important role in the regulation of microtubule assembly and interaction. In Drosophila melanogaster (Fruit fly), this protein is 205 kDa microtubule-associated protein (Map205).